The following is a 128-amino-acid chain: Histone H2A (128 aa).

Positions 1–22 (MSGRGKTGGKARAKAKTRSSRA) are disordered. N-acetylserine is present on Ser2. At Ser2 the chain carries Phosphoserine. Lys6 carries the N6-(2-hydroxyisobutyryl)lysine modification. The residue at position 6 (Lys6) is an N6-acetyllysine. The span at 7-19 (TGGKARAKAKTRS) shows a compositional bias: basic residues. The residue at position 10 (Lys10) is an N6-(2-hydroxyisobutyryl)lysine; alternate. Lys10 is modified (N6-lactoyllysine; alternate). Lys10 is modified (N6-succinyllysine). Residues Lys14 and Lys16 each participate in a glycyl lysine isopeptide (Lys-Gly) (interchain with G-Cter in ubiquitin) cross-link. Lys37 is subject to N6-(2-hydroxyisobutyryl)lysine; alternate. 2 positions are modified to N6-(2-hydroxyisobutyryl)lysine: Lys75 and Lys76. Position 96 is an N6-(2-hydroxyisobutyryl)lysine; alternate (Lys96). Lys96 is subject to N6-succinyllysine. Lys96 is modified (N6-glutaryllysine; alternate). Gln105 bears the N5-methylglutamine mark. Lys119 carries the N6-(2-hydroxyisobutyryl)lysine; alternate modification. Residues Lys119, Lys120, and Lys126 each carry the N6-glutaryllysine; alternate modification. Lys120 is covalently cross-linked (Glycyl lysine isopeptide (Lys-Gly) (interchain with G-Cter in ubiquitin)).

The nucleosome is a histone octamer containing two molecules each of H2A, H2B, H3 and H4 assembled in one H3-H4 heterotetramer and two H2A-H2B heterodimers. The octamer wraps approximately 147 bp of DNA. Post-translationally, monoubiquitination of Lys-120 (H2AK119Ub) gives a specific tag for epigenetic transcriptional repression. Following DNA double-strand breaks (DSBs), it is ubiquitinated through 'Lys-63' linkage of ubiquitin moieties, leading to the recruitment of repair proteins to sites of DNA damage. H2AK119Ub and ionizing radiation-induced 'Lys-63'-linked ubiquitination are distinct events. Phosphorylation on Ser-2 is enhanced during mitosis. Phosphorylation on Ser-2 directly represses transcription. In terms of processing, glutamine methylation at Gln-105 (H2AQ104me) by FBL is specifically dedicated to polymerase I. It is present at 35S ribosomal DNA locus and impairs binding of the FACT complex. Expressed and secreted by skin epithelium.

The protein resides in the nucleus. Its subcellular location is the chromosome. Functionally, core component of nucleosome. Nucleosomes wrap and compact DNA into chromatin, limiting DNA accessibility to the cellular machineries which require DNA as a template. Histones thereby play a central role in transcription regulation, DNA repair, DNA replication and chromosomal stability. DNA accessibility is regulated via a complex set of post-translational modifications of histones, also called histone code, and nucleosome remodeling. The secreted form has antibacterial activity against Gram-positive bacteria and antifungal activity against S.cerevisiae. This Oncorhynchus mykiss (Rainbow trout) protein is Histone H2A.